A 778-amino-acid polypeptide reads, in one-letter code: Aerobic respiration control sensor protein ArcB (778 aa).

The Cytoplasmic portion of the chain corresponds to 1–25 (MKQIRLLAQYYVDLMMKLGLVRFSM). A helical membrane pass occupies residues 26-46 (LLALALVVLAIVVQMAVTMVL). At 47 to 57 (HGQVESIDVIR) the chain is on the periplasmic side. The helical transmembrane segment at 58–78 (SIFFGLLITPWAVYFLSVVVE) threads the bilayer. The Cytoplasmic segment spans residues 79–778 (QLEESRQRLS…KAWVAKATKK (700 aa)). The PAS domain occupies 153-223 (QSSFLRSFLD…ETDEKVFRHN (71 aa)). The 53-residue stretch at 226–278 (LTYEQWLDYPDGRKACFEIRKVPYYDRVGKRHGLMGFGRDITERKRYQDALER) folds into the PAC domain. The Histidine kinase domain maps to 289 to 507 (TISHELRTPL…TFTLTIHAPS (219 aa)). A Phosphohistidine; by autocatalysis modification is found at His292. Residues 527–643 (NVLLVEDIEL…ALTAMIKKFW (117 aa)) enclose the Response regulatory domain. At Asp576 the chain carries 4-aspartylphosphate. The 94-residue stretch at 678 to 771 (GPKLITDGLA…RHDVEVLKAW (94 aa)) folds into the HPt domain. The residue at position 717 (His717) is a Phosphohistidine.

Activation requires a sequential transfer of a phosphate group from a His in the primary transmitter domain, to an Asp in the receiver domain and to a His in the secondary transmitter domain.

The protein resides in the cell inner membrane. It catalyses the reaction ATP + protein L-histidine = ADP + protein N-phospho-L-histidine.. Its function is as follows. Member of the two-component regulatory system ArcB/ArcA. Sensor-regulator protein for anaerobic repression of the arc modulon. Activates ArcA via a four-step phosphorelay. ArcB can also dephosphorylate ArcA by a reverse phosphorelay involving His-717 and Asp-576. This Escherichia coli (strain K12) protein is Aerobic respiration control sensor protein ArcB (arcB).